We begin with the raw amino-acid sequence, 492 residues long: Catalase-1/2 (492 aa).

Active-site residues include histidine 65 and asparagine 138. Tyrosine 348 is a heme binding site.

The protein belongs to the catalase family. In terms of assembly, homotetramer. Heme serves as cofactor.

It localises to the cytoplasm. The protein resides in the cytosol. The protein localises to the peroxisome matrix. The catalysed reaction is 2 H2O2 = O2 + 2 H2O. In terms of biological role, catalyzes the degradation of hydrogen peroxide (H(2)O(2)) generated by peroxisomal oxidases to water and oxygen, thereby protecting cells from the toxic effects of hydrogen peroxide. The sequence is that of Catalase-1/2 (CAT1) from Glycine max (Soybean).